Here is a 458-residue protein sequence, read N- to C-terminus: NADH-quinone oxidoreductase subunit N (458 aa).

Transmembrane regions (helical) follow at residues 2 to 22 (LLIL…CFAL), 30 to 50 (IIYN…FKYS), 62 to 82 (GINI…SLII), 93 to 113 (AIKF…FVAI), 118 to 138 (FLLL…LAGF), 153 to 173 (FILG…IYGF), 196 to 216 (LIIG…SSPL), 235 to 255 (FTSA…KLII), 261 to 281 (INYN…AFGA), 290 to 310 (LMAY…ILPN), 319 to 339 (LYIL…IMLF), 361 to 381 (IAAL…LTGF), 397 to 417 (FTLA…YLKV), and 438 to 458 (LLLI…IILF).

This sequence belongs to the complex I subunit 2 family. In terms of assembly, NDH-1 is composed of 14 different subunits. Subunits NuoA, H, J, K, L, M, N constitute the membrane sector of the complex.

It localises to the cell inner membrane. It catalyses the reaction a quinone + NADH + 5 H(+)(in) = a quinol + NAD(+) + 4 H(+)(out). Functionally, NDH-1 shuttles electrons from NADH, via FMN and iron-sulfur (Fe-S) centers, to quinones in the respiratory chain. The immediate electron acceptor for the enzyme in this species is believed to be ubiquinone. Couples the redox reaction to proton translocation (for every two electrons transferred, four hydrogen ions are translocated across the cytoplasmic membrane), and thus conserves the redox energy in a proton gradient. The protein is NADH-quinone oxidoreductase subunit N of Rickettsia typhi (strain ATCC VR-144 / Wilmington).